Reading from the N-terminus, the 313-residue chain is Intracellular endo-alpha-(1-&gt;5)-L-arabinanase (313 aa).

Catalysis depends on Asp27, which acts as the Proton acceptor. Residues Asp27, Gly105, 144–147 (NAID), and 164–166 (SFW) each bind substrate. The active-site Proton donor is Glu201. His271 serves as a coordination point for Ca(2+).

This sequence belongs to the glycosyl hydrolase 43 family. In terms of assembly, monomer. The cofactor is Ca(2+).

It is found in the cytoplasm. It catalyses the reaction Endohydrolysis of (1-&gt;5)-alpha-arabinofuranosidic linkages in (1-&gt;5)-arabinans.. It participates in glycan metabolism; L-arabinan degradation. Functionally, involved in the degradation of arabinan and is a key enzyme in the complete degradation of the plant cell wall. Catalyzes the cleavage of endo alpha-(1-&gt;5)-L-arabinofuranosyl residues in debranched arabinan. This Geobacillus thermodenitrificans protein is Intracellular endo-alpha-(1-&gt;5)-L-arabinanase (abn-ts).